The primary structure comprises 473 residues: MKILYSLRRFYHVETLFNGTFVLAGRDQETTGFAWWAGNARLINLSGKLLGAHVAHAGLIVFWAGAMNLFEVAHFVPEKPMYEQGLILLPHLATLGWGVGPGGEVLDTFPYFVSGVLHLISSAVLGFGGIYHALLGPETLEESFPFFGYVWKDRNKMTTILGIHLILLGLGSFLLVLKALYFGGVYDTWAPGGGDVRKITNLTLSPSVIFGYLLKSPFGGEGWIVSVDDLEDIIGGHVWLGFICVFGGIWHILTKPFAWARRAFVWSGEAYLSYSLAALSVFGFIACCFVWFNNTAYPSEFYGPTGPEASQAQAFTFLVRDQRLGANVGSAQGPTGLGKYLMRSPTGEVIFGGETMRFWDLRAPWLEPLRGPNGLDLNRLKKDIQPWQERRSAEYMTHAPLGSLNSVGGVATEINAVNYVSPRSWLSTSHFVLGFFFFVGHLWHAGRARAAAAGFEKGIDRDLEPVLYMNPLN.

A propeptide spanning residues 1 to 14 (MKILYSLRRFYHVE) is cleaved from the precursor. Threonine 15 carries the post-translational modification N-acetylthreonine. The residue at position 15 (threonine 15) is a Phosphothreonine. 5 helical membrane passes run 69–93 (LFEV…PHLA), 134–155 (LLGP…KDRN), 178–200 (KALY…RKIT), 255–275 (KPFA…LSYS), and 291–312 (WFNN…ASQA). Glutamate 367 lines the [CaMn4O5] cluster pocket. Residues 447 to 471 (RARAAAAGFEKGIDRDLEPVLYMNP) form a helical membrane-spanning segment.

This sequence belongs to the PsbB/PsbC family. PsbC subfamily. PSII is composed of 1 copy each of membrane proteins PsbA, PsbB, PsbC, PsbD, PsbE, PsbF, PsbH, PsbI, PsbJ, PsbK, PsbL, PsbM, PsbT, PsbX, PsbY, PsbZ, Psb30/Ycf12, at least 3 peripheral proteins of the oxygen-evolving complex and a large number of cofactors. It forms dimeric complexes. Binds multiple chlorophylls and provides some of the ligands for the Ca-4Mn-5O cluster of the oxygen-evolving complex. It may also provide a ligand for a Cl- that is required for oxygen evolution. PSII binds additional chlorophylls, carotenoids and specific lipids. serves as cofactor.

The protein localises to the plastid. The protein resides in the chloroplast thylakoid membrane. In terms of biological role, one of the components of the core complex of photosystem II (PSII). It binds chlorophyll and helps catalyze the primary light-induced photochemical processes of PSII. PSII is a light-driven water:plastoquinone oxidoreductase, using light energy to abstract electrons from H(2)O, generating O(2) and a proton gradient subsequently used for ATP formation. The polypeptide is Photosystem II CP43 reaction center protein (Lolium perenne (Perennial ryegrass)).